A 216-amino-acid polypeptide reads, in one-letter code: Thymidylate kinase (216 aa).

ATP is bound at residue 10–17; sequence GPDGAGKS.

The protein belongs to the thymidylate kinase family.

It catalyses the reaction dTMP + ATP = dTDP + ADP. In terms of biological role, phosphorylation of dTMP to form dTDP in both de novo and salvage pathways of dTTP synthesis. In Lactobacillus acidophilus (strain ATCC 700396 / NCK56 / N2 / NCFM), this protein is Thymidylate kinase.